Reading from the N-terminus, the 762-residue chain is Phospholipase D alpha 4 (762 aa).

The 116-residue stretch at 1–116 folds into the C2 domain; the sequence is MELEEQKKYF…VINGFFPLIA (116 aa). Position 172 (Asp172) interacts with Ca(2+). Residues 301–339 form the PLD phosphodiesterase 1 domain; sequence TAFAHHQKTITLDTRVTNSSTKEREIMSFLGGFDLCDGR. Residues His306, Lys308, and Asp313 contribute to the active site. His306 contributes to the a 1,2-diacyl-sn-glycero-3-phosphate binding site. Residues His345 and His377 each contribute to the Ca(2+) site. 2 residues coordinate a 1,2-diacyl-sn-glycero-3-phosphate: Gln477 and His615. A PLD phosphodiesterase 2 domain is found at 610-637; sequence FMVYVHSKLMIVDDTYILIGSANINQRS. Catalysis depends on residues His615, Lys617, and Asp622. Glu671 provides a ligand contact to Ca(2+).

This sequence belongs to the phospholipase D family. C2-PLD subfamily. The cofactor is Ca(2+). In terms of tissue distribution, expressed in roots, leaves, stems, siliques,flowers and inflorescences.

Its subcellular location is the cell membrane. It catalyses the reaction a 1,2-diacyl-sn-glycero-3-phosphocholine + H2O = a 1,2-diacyl-sn-glycero-3-phosphate + choline + H(+). Its function is as follows. Hydrolyzes glycerol-phospholipids at the terminal phosphodiesteric bond to generate phosphatidic acids (PA). Promotes growth and plays a role in nitrogen signaling. The protein is Phospholipase D alpha 4 of Arabidopsis thaliana (Mouse-ear cress).